The sequence spans 231 residues: tRNA (guanine-N(1)-)-methyltransferase (231 aa).

S-adenosyl-L-methionine is bound by residues Gly-111 and 131 to 136 (LGNYVL).

Belongs to the RNA methyltransferase TrmD family. Homodimer.

The protein resides in the cytoplasm. It catalyses the reaction guanosine(37) in tRNA + S-adenosyl-L-methionine = N(1)-methylguanosine(37) in tRNA + S-adenosyl-L-homocysteine + H(+). Functionally, specifically methylates guanosine-37 in various tRNAs. The protein is tRNA (guanine-N(1)-)-methyltransferase of Leptospira interrogans serogroup Icterohaemorrhagiae serovar copenhageni (strain Fiocruz L1-130).